Consider the following 300-residue polypeptide: Uricase (300 aa).

The residue at position 2 (alanine 2) is an N-acetylalanine. Lysine 6 and lysine 19 each carry N6-acetyllysine; alternate. An N6-succinyllysine; alternate mark is found at lysine 6 and lysine 19. The Charge relay system role is filled by lysine 19. 2 positions are modified to N6-acetyllysine: lysine 23 and lysine 32. 2 positions are modified to phosphoserine: serine 35 and serine 59. Threonine 64 functions as the Charge relay system in the catalytic mechanism. Urate contacts are provided by threonine 64 and aspartate 65. N6-acetyllysine is present on residues lysine 114, lysine 118, and lysine 160. Phenylalanine 166 provides a ligand contact to urate. N6-acetyllysine is present on residues lysine 171 and lysine 181. Arginine 183 lines the urate pocket. An N6-acetyllysine; alternate mark is found at lysine 217 and lysine 224. N6-succinyllysine; alternate occurs at positions 217 and 224. Serine 228 is subject to Phosphoserine. Residues valine 231, glutamine 232, and asparagine 258 each coordinate urate. The active-site Charge relay system is the histidine 260. The residue at position 274 (lysine 274) is an N6-acetyllysine. Position 285 is a phosphotyrosine (tyrosine 285). The short motif at 298–300 (SRL) is the Microbody targeting signal element.

Belongs to the uricase family.

It localises to the peroxisome. It carries out the reaction urate + O2 + H2O = 5-hydroxyisourate + H2O2. Its pathway is purine metabolism; urate degradation; (S)-allantoin from urate: step 1/3. Functionally, catalyzes the oxidation of uric acid to 5-hydroxyisourate, which is further processed to form (S)-allantoin. The sequence is that of Uricase (UOX) from Oryctolagus cuniculus (Rabbit).